The chain runs to 395 residues: MSNSRMNGVEKLSSKSTRRVANAGKATLLALGKAFPSQVVPQENLVEGFLRDTKCDDAFIKEKLEHLCKTTTVKTRYTVLTREILAKYPELTTEGSPTIKQRLEIANEAVVEMALEASLGCIKEWGRPVEDITHIVYVSSSEIRLPGGDLYLSAKLGLRNDVNRVMLYFLGCYGGVTGLRVAKDIAENNPGSRVLLTTSETTILGFRPPNKARPYDLVGAALFGDGAAAVIIGADPRECEAPFMELHYAVQQFLPGTQNVIEGRLTEEGINFKLGRDLPQKIEENIEEFCKKLMGKAGDESMEFNDMFWAVHPGGPAILNRLETKLKLEKEKLESSRRALVDYGNVSSNTILYVMEYMRDELKKKGDAAQEWGLGLAFGPGITFEGLLIRSLTSS.

Residue 63–70 (KLEHLCKT) coordinates CoA. Cys-172 (nucleophile) is an active-site residue. 224–225 (GD) contributes to the substrate binding site. CoA-binding positions include Leu-274, 314 to 317 (GGPA), and Ala-317.

The protein belongs to the thiolase-like superfamily. Chalcone/stilbene synthases family. As to quaternary structure, homodimer. Interacts with 4CLL1/ACOS5 and TKPR1. In terms of tissue distribution, expressed in flowers and flower buds (at protein level), and, at very low levels, in roots, seedlings, leaves and stems. Mostly confined to anther tapetal cells.

Its subcellular location is the endoplasmic reticulum. It functions in the pathway secondary metabolite biosynthesis; flavonoid biosynthesis. In terms of biological role, plant type III polyketide synthases (PKSs) that catalyzes the condensation of malonyl-CoA units with various CoA ester starter molecules to generate a diverse array of natural products including long-chain alkyl alpha-pyrones. Accepts up to C(20) chain-length fatty acyl CoAs as starter substrates, and carries out sequential condensations with malonyl-CoA to produce triketide and tetraketide alpha-pyrones, potential sporopollenin precursors. Favorite substrates for are midchain- and v-hydroxylated fatty acyl-CoAs (e.g. 12-hydroxyoctadecanoyl-CoA and 16-hydroxyhexadecanoyl-CoA). Required for pollen development and sporopollenin biosynthesis, the major constituent of exine in the outer pollen wall. In vitro, can use 4-coumaroyl-coenzyme A as substrate to produce bis-noryangonin and fatty acyl-coenzyme A as substrate to produce medium-chain alkyl pyrones. May play a role in both the synthesis of pollen fatty acids and phenolics found in exine. This is Type III polyketide synthase A from Arabidopsis thaliana (Mouse-ear cress).